The primary structure comprises 170 residues: MAQIRIHEINTRIENEVEVSKFLQEEGVLYEKWNISKLPTHLKENYSLTDENKAEILAVFSKEIADVSSRRGYKAHDVISLSNSTPNLDELLINFQKEHHHTDDEVRFIVSGHGIFAIEGKDGTFFDVELEPGDLISVPENARHYFTLQDDRQVVAIRIFVTTEGWVPIY.

Fe(2+) contacts are provided by H99, H101, E105, and H144. Positions 99, 101, 105, and 144 each coordinate Ni(2+).

The protein belongs to the acireductone dioxygenase (ARD) family. Monomer. Fe(2+) is required as a cofactor. It depends on Ni(2+) as a cofactor.

The catalysed reaction is 1,2-dihydroxy-5-(methylsulfanyl)pent-1-en-3-one + O2 = 3-(methylsulfanyl)propanoate + CO + formate + 2 H(+). It catalyses the reaction 1,2-dihydroxy-5-(methylsulfanyl)pent-1-en-3-one + O2 = 4-methylsulfanyl-2-oxobutanoate + formate + 2 H(+). Its pathway is amino-acid biosynthesis; L-methionine biosynthesis via salvage pathway; L-methionine from S-methyl-5-thio-alpha-D-ribose 1-phosphate: step 5/6. Catalyzes 2 different reactions between oxygen and the acireductone 1,2-dihydroxy-3-keto-5-methylthiopentene (DHK-MTPene) depending upon the metal bound in the active site. Fe-containing acireductone dioxygenase (Fe-ARD) produces formate and 2-keto-4-methylthiobutyrate (KMTB), the alpha-ketoacid precursor of methionine in the methionine recycle pathway. Ni-containing acireductone dioxygenase (Ni-ARD) produces methylthiopropionate, carbon monoxide and formate, and does not lie on the methionine recycle pathway. The protein is Acireductone dioxygenase of Bacillus cereus (strain ATCC 10987 / NRS 248).